Consider the following 187-residue polypeptide: uncharacterized protein (187 aa).

The interval 1-95 (MTTMKRSADP…GSTRPSARYG (95 aa)) is disordered. A compositionally biased stretch (basic residues) spans 46–80 (RARRSRGPKRFLGKRNYRRARARKPGKRDRAHSSK).

The protein resides in the mitochondrion. This is an uncharacterized protein from Arabidopsis thaliana (Mouse-ear cress).